The chain runs to 423 residues: Serine hydroxymethyltransferase (423 aa).

(6S)-5,6,7,8-tetrahydrofolate-binding positions include L125 and G129 to L131. K234 is modified (N6-(pyridoxal phosphate)lysine). A (6S)-5,6,7,8-tetrahydrofolate-binding site is contributed by E249.

This sequence belongs to the SHMT family. As to quaternary structure, homodimer. The cofactor is pyridoxal 5'-phosphate.

Its subcellular location is the cytoplasm. It carries out the reaction (6R)-5,10-methylene-5,6,7,8-tetrahydrofolate + glycine + H2O = (6S)-5,6,7,8-tetrahydrofolate + L-serine. Its pathway is one-carbon metabolism; tetrahydrofolate interconversion. The protein operates within amino-acid biosynthesis; glycine biosynthesis; glycine from L-serine: step 1/1. In terms of biological role, catalyzes the reversible interconversion of serine and glycine with tetrahydrofolate (THF) serving as the one-carbon carrier. This reaction serves as the major source of one-carbon groups required for the biosynthesis of purines, thymidylate, methionine, and other important biomolecules. Also exhibits THF-independent aldolase activity toward beta-hydroxyamino acids, producing glycine and aldehydes, via a retro-aldol mechanism. This chain is Serine hydroxymethyltransferase, found in Thermobifida fusca (strain YX).